Consider the following 266-residue polypeptide: PTS system mannose-specific EIIC component (266 aa).

Met-1 carries the post-translational modification N-formylmethionine. Residues 1–4 are Periplasmic-facing; sequence MEIT. The region spanning 1–237 is the PTS EIIC type-4 domain; sequence MEITTLQIVL…GVIGTVMAVL (237 aa). An intramembrane segment occupies 5–43; sequence TLQIVLVFIVACIAGMGSILDEFQFHRPLIACTLVGIVL. The Periplasmic portion of the chain corresponds to 44–46; that stretch reads GDM. An intramembrane segment occupies 47 to 86; that stretch reads KTGIIIGGTLEMIALGWMNIGAAVAPDAALASIISTILVI. The Periplasmic portion of the chain corresponds to 87–90; it reads AGHQ. Residues 91-124 are membrane-embedded; sequence SIGAGIALAIPLAAAGQVLTIIVRTITVAFQHAA. The Cytoplasmic portion of the chain corresponds to 125-132; the sequence is DKAADNGN. A transmembrane span lies at residues 133-160; the sequence is LTAISWIHVSSLFLQAMRVAIPAVIVAL. The Periplasmic portion of the chain corresponds to 161 to 176; the sequence is SVGTSEVQNMLNAIPE. The hydrophobic stretch at 177–200 threads the membrane; sequence VVTNGLNIAGGMIVVVGYAMVINM. The Cytoplasmic portion of the chain corresponds to 201 to 207; that stretch reads MRAGYLM. Residues 208-218 are membrane-embedded; it reads PFFYLGFVTAA. Residues 219–224 are Periplasmic-facing; it reads FTNFNL. A membrane pass occupies residues 225 to 242; it reads VALGVIGTVMAVLYIQLS. Residues 243 to 266 lie on the Cytoplasmic side of the membrane; sequence PKYNRVAGAPAQAAGNNDLDNELD.

As to quaternary structure, homotrimer of protomers that are composed of two subunits, IIC and IID.

The protein localises to the cell inner membrane. The phosphoenolpyruvate-dependent sugar phosphotransferase system (sugar PTS), a major carbohydrate active transport system, catalyzes the phosphorylation of incoming sugar substrates concomitantly with their translocation across the cell membrane. The enzyme II ManXYZ PTS system is involved in mannose transport. This is PTS system mannose-specific EIIC component (manY) from Escherichia coli O157:H7.